An 884-amino-acid chain; its full sequence is Chondroitin sulfate synthase 3 (884 aa).

Topologically, residues 1–7 are cytoplasmic; the sequence is MAVRSRR. Residues 8-28 traverse the membrane as a helical; Signal-anchor for type II membrane protein segment; sequence PWVSVALGLVLGFTAASWLIA. Topologically, residues 29 to 884 are lumenal; that stretch reads PRVAELSEKR…LGVRDNRTLS (856 aa). Residues 47–164 are disordered; sequence YYGRSATGPR…NGSGDGGAAV (118 aa). Composition is skewed to low complexity over residues 60–69 and 84–96; these read QQLLPQPQSR and PGPQQPEAAPGGP. 2 N-linked (GlcNAc...) asparagine glycosylation sites follow: N155 and N281. A disordered region spans residues 437-456; the sequence is SNSEVSKEDQQLGRTPSFNH. N712 carries an N-linked (GlcNAc...) asparagine glycan. 2 residues coordinate a divalent metal cation: D722 and H836. N-linked (GlcNAc...) asparagine glycosylation occurs at N880.

This sequence belongs to the chondroitin N-acetylgalactosaminyltransferase family. Co(2+) serves as cofactor. Requires Mn(2+) as cofactor. It depends on Cd(2+) as a cofactor.

Its subcellular location is the golgi apparatus. It localises to the golgi stack membrane. The catalysed reaction is 3-O-(beta-D-GlcA-(1-&gt;3)-beta-D-GalNAc-(1-&gt;4)-beta-D-GlcA-(1-&gt;3)-beta-D-Gal-(1-&gt;3)-beta-D-Gal-(1-&gt;4)-beta-D-Xyl)-L-seryl-[protein] + UDP-N-acetyl-alpha-D-galactosamine = 3-O-(beta-D-GalNAc-(1-&gt;4)-beta-D-GlcA-(1-&gt;3)-beta-D-GalNAc-(1-&gt;4)-beta-D-GlcA-(1-&gt;3)-beta-D-Gal-(1-&gt;3)-beta-D-Gal-(1-&gt;4)-beta-D-Xyl)-L-seryl-[protein] + UDP + H(+). It carries out the reaction 3-O-{beta-D-GlcA-(1-&gt;3)-[beta-D-GalNAc-(1-&gt;4)-beta-D-GlcA-(1-&gt;3)](n)-beta-D-GalNAc-(1-&gt;4)-beta-D-GlcA-(1-&gt;3)-beta-D-Gal-(1-&gt;3)-beta-D-Gal-(1-&gt;4)-beta-D-Xyl}-L-seryl-[protein] + UDP-N-acetyl-alpha-D-galactosamine = 3-O-{[beta-D-GalNAc-(1-&gt;4)-beta-D-GlcA-(1-&gt;3)](n+1)-beta-D-GalNAc-(1-&gt;4)-beta-D-GlcA-(1-&gt;3)-beta-D-Gal-(1-&gt;3)-beta-D-Gal-(1-&gt;4)-beta-D-Xyl}-L-seryl-[protein] + UDP + H(+). The enzyme catalyses 3-O-(beta-D-GalNAc-(1-&gt;4)-beta-D-GlcA-(1-&gt;3)-beta-D-Gal-(1-&gt;3)-beta-D-Gal-(1-&gt;4)-beta-D-Xyl)-L-seryl-[protein] + UDP-alpha-D-glucuronate = 3-O-(beta-D-GlcA-(1-&gt;3)-beta-D-GalNAc-(1-&gt;4)-beta-D-GlcA-(1-&gt;3)-beta-D-Gal-(1-&gt;3)-beta-D-Gal-(1-&gt;4)-beta-D-Xyl)-L-seryl-[protein] + UDP + H(+). It catalyses the reaction 3-O-{[beta-D-GalNAc-(1-&gt;4)-beta-D-GlcA-(1-&gt;3)](n)-beta-D-GalNAc-(1-&gt;4)-beta-D-GlcA-(1-&gt;3)-beta-D-Gal-(1-&gt;3)-beta-D-Gal-(1-&gt;4)-beta-D-Xyl}-L-seryl-[protein] + UDP-alpha-D-glucuronate = 3-O-{beta-D-GlcA-(1-&gt;3)-[beta-D-GalNAc-(1-&gt;4)-beta-D-GlcA-(1-&gt;3)](n)-beta-D-GalNAc-(1-&gt;4)-beta-D-GlcA-(1-&gt;3)-beta-D-Gal-(1-&gt;3)-beta-D-Gal-(1-&gt;4)-beta-D-Xyl}-L-seryl-[protein] + UDP + H(+). Its function is as follows. Has both beta-1,3-glucuronic acid and beta-1,4-N-acetylgalactosamine transferase activity. Transfers glucuronic acid (GlcUA) from UDP-GlcUA and N-acetylgalactosamine (GalNAc) from UDP-GalNAc to the non-reducing end of the elongating chondroitin polymer. Specific activity is much reduced compared to CHSY1. The sequence is that of Chondroitin sulfate synthase 3 (Chsy3) from Mus musculus (Mouse).